Consider the following 303-residue polypeptide: ATP synthase gamma chain (303 aa).

The protein belongs to the ATPase gamma chain family. As to quaternary structure, F-type ATPases have 2 components, CF(1) - the catalytic core - and CF(0) - the membrane proton channel. CF(1) has five subunits: alpha(3), beta(3), gamma(1), delta(1), epsilon(1). CF(0) has three main subunits: a, b and c.

The protein resides in the cell inner membrane. In terms of biological role, produces ATP from ADP in the presence of a proton gradient across the membrane. The gamma chain is believed to be important in regulating ATPase activity and the flow of protons through the CF(0) complex. In Elusimicrobium minutum (strain Pei191), this protein is ATP synthase gamma chain.